An 86-amino-acid chain; its full sequence is Omega-theraphotoxin-Hhn1f 4 (86 aa).

The N-terminal stretch at 1–21 (MKSIVFVALFGLALLAVVCSA) is a signal peptide. A propeptide spanning residues 22-50 (SEDAHKELLKEVVRAMVVDKTDAVQAGER) is cleaved from the precursor. Disulfide bonds link cysteine 52-cysteine 66, cysteine 59-cysteine 71, and cysteine 65-cysteine 78.

Belongs to the neurotoxin 10 (Hwtx-1) family. 17 (Hntx-9) subfamily. As to expression, expressed by the venom gland.

It is found in the secreted. Its function is as follows. Ion channel inhibitor. This is Omega-theraphotoxin-Hhn1f 4 from Cyriopagopus hainanus (Chinese bird spider).